The chain runs to 1041 residues: Serine-repeat antigen protein 6 (1041 aa).

A signal peptide spans 1–34 (MIFFNFKLNRMICPIFFLYIINVLFTQYFIKCEG). N-linked (GlcNAc...) asparagine glycosylation is present at N84. Residues 101 to 111 (KVVSSSESGKG) are compositionally biased toward low complexity. A disordered region spans residues 101–173 (KVVSSSESGK…TESSSETLNK (73 aa)). Residues 114–149 (VSHTKVTSEGLSDTQPNVTQSVSSSTHTPGSLDSTM) are compositionally biased toward polar residues. A glycan (N-linked (GlcNAc...) asparagine) is linked at N130. The span at 150-168 (STEQHSSVSQSSLPTESSS) shows a compositional bias: low complexity. An N-linked (GlcNAc...) asparagine glycan is attached at N459. A disordered region spans residues 500 to 577 (TLPSESPSES…GDTNYVYDFD (78 aa)). The segment covering 502–515 (PSESPSESSSKSDS) has biased composition (low complexity). Residues 521–545 (NDKDKNEDKDDMSKNSKEEFKNDDK) show a composition bias toward basic and acidic residues. N554 carries N-linked (GlcNAc...) asparagine glycosylation. The segment covering 564–574 (NINNGDTNYVY) has biased composition (low complexity). N583 carries N-linked (GlcNAc...) asparagine glycosylation. C654 is a catalytic residue. An N-linked (GlcNAc...) asparagine glycan is attached at N684. Active-site residues include H820 and N845. N984 is a glycosylation site (N-linked (GlcNAc...) asparagine).

It belongs to the peptidase C1 family. In terms of processing, just prior to merozoite egress from host erythrocytes, proteolytically cleaved by SUB1 to generate the active 75kDa form.

It is found in the parasitophorous vacuole lumen. It localises to the parasitophorous vacuole membrane. In terms of biological role, cysteine protease which plays an essential role in merozoite egress from host erythrocytes. May cleave host SPTB/beta spectrin and ANK1/ankyrin-1 which disrupts host erythrocyte actin cytoskeleton and leads to host erythrocyte cell membrane rupture. The chain is Serine-repeat antigen protein 6 from Plasmodium falciparum.